Consider the following 148-residue polypeptide: 6,7-dimethyl-8-ribityllumazine synthase (148 aa).

5-amino-6-(D-ribitylamino)uracil-binding positions include Phe-13, 44–46 (ALE), and 73–75 (MVI). Position 78–79 (78–79 (ET)) interacts with (2S)-2-hydroxy-3-oxobutyl phosphate. The active-site Proton donor is His-81. Residue Asn-106 participates in 5-amino-6-(D-ribitylamino)uracil binding. Residue Arg-120 coordinates (2S)-2-hydroxy-3-oxobutyl phosphate.

Belongs to the DMRL synthase family.

It catalyses the reaction (2S)-2-hydroxy-3-oxobutyl phosphate + 5-amino-6-(D-ribitylamino)uracil = 6,7-dimethyl-8-(1-D-ribityl)lumazine + phosphate + 2 H2O + H(+). It functions in the pathway cofactor biosynthesis; riboflavin biosynthesis; riboflavin from 2-hydroxy-3-oxobutyl phosphate and 5-amino-6-(D-ribitylamino)uracil: step 1/2. Functionally, catalyzes the formation of 6,7-dimethyl-8-ribityllumazine by condensation of 5-amino-6-(D-ribitylamino)uracil with 3,4-dihydroxy-2-butanone 4-phosphate. This is the penultimate step in the biosynthesis of riboflavin. The chain is 6,7-dimethyl-8-ribityllumazine synthase from Agrobacterium fabrum (strain C58 / ATCC 33970) (Agrobacterium tumefaciens (strain C58)).